The primary structure comprises 461 residues: Proton extrusion protein PxcA (461 aa).

A run of 4 helical transmembrane segments spans residues 244 to 264 (FMLL…ALIV), 339 to 359 (LKNI…VFTG), 386 to 406 (IILF…EVLV), and 421 to 441 (FINM…KYWI).

Belongs to the CemA family.

The protein resides in the cell inner membrane. Functionally, required for H(+) efflux immediately after light irradiation to form a rapid H(+) concentration gradient across the thylakoid membranes. Together with PxcL, contributes to transient H(+) uptake following dark to light transition. The sequence is that of Proton extrusion protein PxcA from Thermosynechococcus vestitus (strain NIES-2133 / IAM M-273 / BP-1).